Consider the following 234-residue polypeptide: Biosynthetic peptidoglycan transglycosylase (234 aa).

Residues 11 to 31 traverse the membrane as a helical segment; sequence RFLLFAMLGFVGLSVLLVLVF.

It belongs to the glycosyltransferase 51 family.

The protein localises to the cell inner membrane. The enzyme catalyses [GlcNAc-(1-&gt;4)-Mur2Ac(oyl-L-Ala-gamma-D-Glu-L-Lys-D-Ala-D-Ala)](n)-di-trans,octa-cis-undecaprenyl diphosphate + beta-D-GlcNAc-(1-&gt;4)-Mur2Ac(oyl-L-Ala-gamma-D-Glu-L-Lys-D-Ala-D-Ala)-di-trans,octa-cis-undecaprenyl diphosphate = [GlcNAc-(1-&gt;4)-Mur2Ac(oyl-L-Ala-gamma-D-Glu-L-Lys-D-Ala-D-Ala)](n+1)-di-trans,octa-cis-undecaprenyl diphosphate + di-trans,octa-cis-undecaprenyl diphosphate + H(+). It participates in cell wall biogenesis; peptidoglycan biosynthesis. In terms of biological role, peptidoglycan polymerase that catalyzes glycan chain elongation from lipid-linked precursors. The protein is Biosynthetic peptidoglycan transglycosylase of Chromohalobacter salexigens (strain ATCC BAA-138 / DSM 3043 / CIP 106854 / NCIMB 13768 / 1H11).